We begin with the raw amino-acid sequence, 248 residues long: Glutamine-binding periplasmic protein (248 aa).

Positions 1 to 22 are cleaved as a signal peptide; it reads MKSVLKVSLAALTLAFAVSSHA.

Belongs to the bacterial solute-binding protein 3 family.

It localises to the periplasm. Involved in a glutamine-transport system GlnHPQ. The chain is Glutamine-binding periplasmic protein (glnH) from Escherichia coli O157:H7.